A 157-amino-acid polypeptide reads, in one-letter code: Protein Smg (157 aa).

This sequence belongs to the Smg family.

This is Protein Smg from Pectobacterium carotovorum subsp. carotovorum (strain PC1).